Here is a 187-residue protein sequence, read N- to C-terminus: Imidazoleglycerol-phosphate dehydratase (187 aa).

The protein belongs to the imidazoleglycerol-phosphate dehydratase family.

It is found in the cytoplasm. It carries out the reaction D-erythro-1-(imidazol-4-yl)glycerol 3-phosphate = 3-(imidazol-4-yl)-2-oxopropyl phosphate + H2O. It functions in the pathway amino-acid biosynthesis; L-histidine biosynthesis; L-histidine from 5-phospho-alpha-D-ribose 1-diphosphate: step 6/9. The sequence is that of Imidazoleglycerol-phosphate dehydratase from Pyrobaculum calidifontis (strain DSM 21063 / JCM 11548 / VA1).